The sequence spans 81 residues: Photosystem I iron-sulfur center (81 aa).

4Fe-4S ferredoxin-type domains are found at residues 2 to 31 (SHSV…MVPW) and 37 to 68 (GQIA…VRVY). The [4Fe-4S] cluster site is built by Cys-11, Cys-14, Cys-17, Cys-21, Cys-48, Cys-51, Cys-54, and Cys-58.

The eukaryotic PSI reaction center is composed of at least 11 subunits. It depends on [4Fe-4S] cluster as a cofactor.

Its subcellular location is the plastid. It localises to the chloroplast thylakoid membrane. The enzyme catalyses reduced [plastocyanin] + hnu + oxidized [2Fe-2S]-[ferredoxin] = oxidized [plastocyanin] + reduced [2Fe-2S]-[ferredoxin]. In terms of biological role, apoprotein for the two 4Fe-4S centers FA and FB of photosystem I (PSI); essential for photochemical activity. FB is the terminal electron acceptor of PSI, donating electrons to ferredoxin. The C-terminus interacts with PsaA/B/D and helps assemble the protein into the PSI complex. Required for binding of PsaD and PsaE to PSI. PSI is a plastocyanin/cytochrome c6-ferredoxin oxidoreductase, converting photonic excitation into a charge separation, which transfers an electron from the donor P700 chlorophyll pair to the spectroscopically characterized acceptors A0, A1, FX, FA and FB in turn. This Euglena gracilis protein is Photosystem I iron-sulfur center.